The primary structure comprises 339 residues: MEILLQKVYDQKNLSKAEMNIVATEIFEGRLSKTKIAAFLMALKVKGETAEEMAGIAEAMQQVAIQVDFPAGTAMDNCGTGGDKSNSFNISTTSAFVLAAAGIPVAKHGNRSISSRSGSADVCQELGIDINMRPEDMTYLLEKVGIAFLFAPHVHPNMKYVMDVRKELGTPTIFNLIGPLTNPVHLETQLMGIYRRDLIRQTAEVLGQLGRKRAVVLNGAGFMDEASLAGENHYALYESGEVHLYTLKPEEVGLASYPLEAIRGGDAKENAAILRSVLDGEPGAYLDTVLLNAGFGLFANGKVKTVKEGVDLARDLVRSGLAKQKLQDLITYQKEVLAK.

5-phospho-alpha-D-ribose 1-diphosphate contacts are provided by residues G79, 82–83 (GD), S87, 89–92 (NIST), 107–115 (KHGNRSISS), and S119. G79 lines the anthranilate pocket. S91 contacts Mg(2+). N110 provides a ligand contact to anthranilate. Residue R165 coordinates anthranilate. Residues D224 and E225 each contribute to the Mg(2+) site.

The protein belongs to the anthranilate phosphoribosyltransferase family. As to quaternary structure, homodimer. Requires Mg(2+) as cofactor.

The catalysed reaction is N-(5-phospho-beta-D-ribosyl)anthranilate + diphosphate = 5-phospho-alpha-D-ribose 1-diphosphate + anthranilate. It participates in amino-acid biosynthesis; L-tryptophan biosynthesis; L-tryptophan from chorismate: step 2/5. In terms of biological role, catalyzes the transfer of the phosphoribosyl group of 5-phosphorylribose-1-pyrophosphate (PRPP) to anthranilate to yield N-(5'-phosphoribosyl)-anthranilate (PRA). The chain is Anthranilate phosphoribosyltransferase from Listeria innocua serovar 6a (strain ATCC BAA-680 / CLIP 11262).